We begin with the raw amino-acid sequence, 190 residues long: MTETPNTSSEEIQTSEPSPDNELQVLQQENANLKAELQEQNDRYLMALAEAENSRKRLQKERTEMMQYAVENALMDFLPPIESMEKALGFASQTSEEVKNWAIGFQMILQQFKQIFEEKGVVEYSSKGELFNPYLHEAVEIEETTTIPEGTILEEFTKGYKIGDRPIRVAKVKVAKLPAKGNSDSNEEKE.

Polar residues predominate over residues 1 to 18; that stretch reads MTETPNTSSEEIQTSEPS. The segment at 1–21 is disordered; sequence MTETPNTSSEEIQTSEPSPDN.

The protein belongs to the GrpE family. As to quaternary structure, homodimer.

Its subcellular location is the cytoplasm. Participates actively in the response to hyperosmotic and heat shock by preventing the aggregation of stress-denatured proteins, in association with DnaK and GrpE. It is the nucleotide exchange factor for DnaK and may function as a thermosensor. Unfolded proteins bind initially to DnaJ; upon interaction with the DnaJ-bound protein, DnaK hydrolyzes its bound ATP, resulting in the formation of a stable complex. GrpE releases ADP from DnaK; ATP binding to DnaK triggers the release of the substrate protein, thus completing the reaction cycle. Several rounds of ATP-dependent interactions between DnaJ, DnaK and GrpE are required for fully efficient folding. The protein is Protein GrpE of Chlamydia trachomatis serovar L2 (strain ATCC VR-902B / DSM 19102 / 434/Bu).